The sequence spans 331 residues: MSGDEMIFDPTMSKKKKKKKKPFMLDEEGDAQTEETQPSETKEVEPEPTEEKDVDADEEDSRKKDASDDLDDLNFFNQKKKKKKTKKIFDIDEAEEAIKDVKIESDAQEPAEPEDDLDIMLGNKKKKKKNVKFPEEDEILEKDEALEDEDSKKDDGISFSSQTAWAGSERDYTYEELLNRVFNIMREKNPDMVAGEKRKFVMKPPQVVRVGTKKTSFVNFTDICKLLHRQPKHLLAFLLAELGTSGSIDGNNQLVIKGRFQQKQIENVLRRYIKEYVTCHTCRSPDTILQKDTRLYFLQCETCHSRCSVASIKTGFQAVTGKRAQLRAKAN.

Disordered regions lie at residues 1–75 and 97–120; these read MSGD…DLNF and AIKDVKIESDAQEPAEPEDDLDIM. Serine 2 bears the N-acetylserine mark. Phosphoserine occurs at positions 2 and 13. Positions 13–22 are enriched in basic residues; sequence SKKKKKKKKP. The residue at position 36 (threonine 36) is a Phosphothreonine. Residues 40-51 show a composition bias toward basic and acidic residues; sequence ETKEVEPEPTEE. The residue at position 67 (serine 67) is a Phosphoserine. Residue lysine 102 forms a Glycyl lysine isopeptide (Lys-Gly) (interchain with G-Cter in SUMO2) linkage. A Phosphoserine modification is found at serine 105. Residues 106–118 show a composition bias toward acidic residues; that stretch reads DAQEPAEPEDDLD. Residues serine 158 and serine 216 each carry the phosphoserine modification. Residues lysine 263 and lysine 291 each carry the N6-acetyllysine modification. The C4-type zinc-finger motif lies at 279 to 303; sequence CHTCRSPDTILQKDTRLYFLQCETC.

The protein belongs to the eIF-2-beta/eIF-5 family. As to quaternary structure, eukaryotic translation initiation factor 2 eIF2 is a heterotrimeric complex composed of an alpha (EIF2S1), a beta (EIF2S2) and a gamma (EIF2S3) chain. eIF2 is member of the 43S pre-initiation complex (43S PIC). eIF2 forms a complex with at least CELF1/CUGBP1, CALR, CALR3, EIF2S1, EIF2S2, HSP90B1 and HSPA5. Interacts with BZW2/5MP1. Interacts with EIF5.

Its subcellular location is the cytoplasm. The protein resides in the cytosol. Functionally, component of the eIF2 complex that functions in the early steps of protein synthesis by forming a ternary complex with GTP and initiator tRNA. This complex binds to a 40S ribosomal subunit, followed by mRNA binding to form the 43S pre-initiation complex (43S PIC). Junction of the 60S ribosomal subunit to form the 80S initiation complex is preceded by hydrolysis of the GTP bound to eIF2 and release of an eIF2-GDP binary complex. In order for eIF2 to recycle and catalyze another round of initiation, the GDP bound to eIF2 must exchange with GTP by way of a reaction catalyzed by eIF2B. This Mus musculus (Mouse) protein is Eukaryotic translation initiation factor 2 subunit 2 (Eif2s2).